Reading from the N-terminus, the 478-residue chain is BUB3-interacting and GLEBS motif-containing protein ZNF207 (478 aa).

Positions Met-1 to Glu-92 are microtubule-binding region. 2 C2H2-type zinc fingers span residues Pro-11–His-34 and Phe-35–His-58. Residues Gln-99 to Asp-111 show a composition bias toward basic and acidic residues. Disordered regions lie at residues Gln-99–Pro-157, Ala-238–Glu-276, Val-300–Lys-362, and Arg-384–Tyr-478. Residues Asp-112 to Ser-121 show a composition bias toward acidic residues. A compositionally biased stretch (polar residues) spans Phe-127–Gln-136. Residues Met-142–Pro-157 are compositionally biased toward pro residues. Low complexity-rich tracts occupy residues Ser-267 to Glu-276, Thr-310 to Lys-362, and Gln-433 to Tyr-446. The tract at residues Ala-359 to Gln-391 is GLEBS. Residues Gly-447–Met-467 are compositionally biased toward pro residues.

As to quaternary structure, interacts (via GLEBS region) with BUB3. In terms of tissue distribution, ubiquitous.

The protein localises to the nucleus. Its subcellular location is the chromosome. It localises to the centromere. The protein resides in the kinetochore. It is found in the cytoplasm. The protein localises to the cytoskeleton. Its subcellular location is the spindle. In terms of biological role, kinetochore- and microtubule-binding protein that plays a key role in spindle assembly. ZNF207/BuGZ is mainly composed of disordered low-complexity regions and undergoes phase transition or coacervation to form temperature-dependent liquid droplets. Coacervation promotes microtubule bundling and concentrates tubulin, promoting microtubule polymerization and assembly of spindle and spindle matrix by concentrating its building blocks. Also acts as a regulator of mitotic chromosome alignment by mediating the stability and kinetochore loading of BUB3. Mechanisms by which BUB3 is protected are unclear: according to a first report, ZNF207/BuGZ may act by blocking ubiquitination and proteasomal degradation of BUB3. According to another report, the stabilization is independent of the proteasome. The protein is BUB3-interacting and GLEBS motif-containing protein ZNF207 of Homo sapiens (Human).